A 272-amino-acid chain; its full sequence is HMP-PP phosphatase (272 aa).

Residue aspartate 8 is the Nucleophile of the active site. 3 residues coordinate Mg(2+): aspartate 8, aspartate 10, and aspartate 212.

This sequence belongs to the HAD-like hydrolase superfamily. Cof family. It depends on Mg(2+) as a cofactor.

It carries out the reaction 4-amino-2-methyl-5-(diphosphooxymethyl)pyrimidine + H2O = 4-amino-2-methyl-5-(phosphooxymethyl)pyrimidine + phosphate + H(+). Catalyzes the hydrolysis of 4-amino-2-methyl-5-hydroxymethylpyrimidine pyrophosphate (HMP-PP) to 4-amino-2-methyl-5-hydroxymethylpyrimidine phosphate (HMP-P). The sequence is that of HMP-PP phosphatase from Escherichia coli O6:H1 (strain CFT073 / ATCC 700928 / UPEC).